Reading from the N-terminus, the 301-residue chain is MSWIERIKSNIAPTRKASIPEGVWTKCDSCGQVLYRAELERNLEVCPKCDHHMRMSARNRLHSLLDEGTMVELGSELEPKDLLKFRDSKKYKDRIASAQKETGEKDALVVMKGTLHEMPVVAAAFEFSFMGGSMGSVVGARFIRAVEQALEDNCPLICFSASGGARMQEALMSLMQMAKTSAALGKMQERGLPYISVLTDPTMGGVSASFAMLGDLNIAEPKALIGFAGPRVIEQTVREKLPPGFQRSEFLIQKGAIDMIVRRPEMRLKLASVLAKLMNLPAPSPDEPRESVVVPDQEPEA.

One can recognise a CoA carboxyltransferase N-terminal domain in the interval 23 to 292 (VWTKCDSCGQ…PSPDEPRESV (270 aa)). The Zn(2+) site is built by C27, C30, C46, and C49. Residues 27–49 (CDSCGQVLYRAELERNLEVCPKC) form a C4-type zinc finger. The disordered stretch occupies residues 280–301 (LPAPSPDEPRESVVVPDQEPEA).

Belongs to the AccD/PCCB family. As to quaternary structure, acetyl-CoA carboxylase is a heterohexamer composed of biotin carboxyl carrier protein (AccB), biotin carboxylase (AccC) and two subunits each of ACCase subunit alpha (AccA) and ACCase subunit beta (AccD). Zn(2+) serves as cofactor.

The protein localises to the cytoplasm. The catalysed reaction is N(6)-carboxybiotinyl-L-lysyl-[protein] + acetyl-CoA = N(6)-biotinyl-L-lysyl-[protein] + malonyl-CoA. Its pathway is lipid metabolism; malonyl-CoA biosynthesis; malonyl-CoA from acetyl-CoA: step 1/1. Functionally, component of the acetyl coenzyme A carboxylase (ACC) complex. Biotin carboxylase (BC) catalyzes the carboxylation of biotin on its carrier protein (BCCP) and then the CO(2) group is transferred by the transcarboxylase to acetyl-CoA to form malonyl-CoA. This Enterobacter sp. (strain 638) protein is Acetyl-coenzyme A carboxylase carboxyl transferase subunit beta.